Consider the following 173-residue polypeptide: Dual-action ribosomal maturation protein DarP (173 aa).

Belongs to the DarP family.

The protein resides in the cytoplasm. In terms of biological role, member of a network of 50S ribosomal subunit biogenesis factors which assembles along the 30S-50S interface, preventing incorrect 23S rRNA structures from forming. Promotes peptidyl transferase center (PTC) maturation. This chain is Dual-action ribosomal maturation protein DarP, found in Pseudomonas putida (strain W619).